The sequence spans 196 residues: Serine recombinase PinQ (196 aa).

One can recognise a Resolvase/invertase-type recombinase catalytic domain in the interval 3–143 (QIFAYCRIST…SGIVRARGAG (141 aa)). Ser11 functions as the O-(5'-phospho-DNA)-serine intermediate in the catalytic mechanism.

Belongs to the site-specific recombinase resolvase family.

The sequence is that of Serine recombinase PinQ (pinQ) from Escherichia coli (strain K12).